A 205-amino-acid chain; its full sequence is Small ribosomal subunit protein uS4 (205 aa).

The tract at residues asparagine 18 to serine 46 is disordered. Residues arginine 94–asparagine 157 form the S4 RNA-binding domain.

It belongs to the universal ribosomal protein uS4 family. In terms of assembly, part of the 30S ribosomal subunit. Contacts protein S5. The interaction surface between S4 and S5 is involved in control of translational fidelity.

Functionally, one of the primary rRNA binding proteins, it binds directly to 16S rRNA where it nucleates assembly of the body of the 30S subunit. In terms of biological role, with S5 and S12 plays an important role in translational accuracy. This is Small ribosomal subunit protein uS4 from Rhodopseudomonas palustris (strain BisB5).